Here is a 152-residue protein sequence, read N- to C-terminus: SUZ RNA-binding domain-containing (152 aa).

Met1 bears the N-acetylmethionine mark. 2 disordered regions span residues 30 to 86 (TQKE…LPVK) and 99 to 152 (RKRI…KQRR). 3 positions are modified to phosphoserine: Ser37, Ser39, and Ser51. Positions 42–107 (KVPIVIQDDS…ARKRILGSAS (66 aa)) constitute an SUZ domain. A compositionally biased stretch (polar residues) spans 66 to 79 (PTSNGVVSGPNSAS). 2 positions are modified to phosphoserine: Ser105 and Ser107. The 42-residue stretch at 111–152 (EQEKPILDRPTRISQPEDSRQPNNVIRQPLGPDGSQGFKQRR) folds into the SUZ-C domain. Basic and acidic residues predominate over residues 113-130 (EKPILDRPTRISQPEDSR).

This sequence belongs to the SZRD1 family.

This is SUZ RNA-binding domain-containing (SZRD1) from Bos taurus (Bovine).